The primary structure comprises 154 residues: MVKAVAVVRGDSKVQGTVHFEQESESAPTTISWEIEGNDPNALRGFHIHQFGDNTNGCTSAGPHFNPFGKQHGAPEDDERHVGDLGNISTDGNGVAKGTKQDLLIKLIGKDSILGRTIVVHAGTDDYGKGGFEDSKTTGHAGARPACGVIGLTQ.

Residues histidine 47, histidine 49, and histidine 64 each coordinate Cu cation. Cysteines 58 and 147 form a disulfide. Residues histidine 64, histidine 72, histidine 81, and aspartate 84 each contribute to the Zn(2+) site. A Cu cation-binding site is contributed by histidine 121. Arginine 144 lines the substrate pocket.

This sequence belongs to the Cu-Zn superoxide dismutase family. As to quaternary structure, homodimer. The cofactor is Cu cation. It depends on Zn(2+) as a cofactor.

Its subcellular location is the cytoplasm. The catalysed reaction is 2 superoxide + 2 H(+) = H2O2 + O2. Its function is as follows. Destroys radicals which are normally produced within the cells and which are toxic to biological systems. The protein is Superoxide dismutase [Cu-Zn] (SOD1) of Candida albicans (Yeast).